Reading from the N-terminus, the 404-residue chain is Argininosuccinate synthase (404 aa).

ATP contacts are provided by residues 10-18 (AYSGGVDTS) and Ala-38. L-citrulline is bound at residue Tyr-89. Gly-119 is an ATP binding site. L-aspartate contacts are provided by Thr-121, Asn-125, and Asp-126. Asn-125 provides a ligand contact to L-citrulline. L-citrulline contacts are provided by Arg-129, Ser-177, Ser-186, Glu-262, and Tyr-274.

The protein belongs to the argininosuccinate synthase family. Type 1 subfamily. Homotetramer.

It localises to the cytoplasm. It catalyses the reaction L-citrulline + L-aspartate + ATP = 2-(N(omega)-L-arginino)succinate + AMP + diphosphate + H(+). The protein operates within amino-acid biosynthesis; L-arginine biosynthesis; L-arginine from L-ornithine and carbamoyl phosphate: step 2/3. This is Argininosuccinate synthase from Prochlorococcus marinus subsp. pastoris (strain CCMP1986 / NIES-2087 / MED4).